The chain runs to 930 residues: RNA-binding protein 10 (930 aa).

Composition is skewed to basic and acidic residues over residues 1-14 and 21-45; these read MEYE…DRTG and RSQD…RSYP. The interval 1–127 is disordered; that stretch reads MEYERRGGRG…EDEEEEEEKA (127 aa). A compositionally biased stretch (acidic residues) spans 59–70; it reads DSSEEQSAEDSY. Residues serine 61 and serine 89 each carry the phosphoserine modification. Over residues 80 to 89 the composition is skewed to basic residues; it reads RRRRRRHRHS. A compositionally biased stretch (basic and acidic residues) spans 98-111; the sequence is RDGDYRDQDYRTEQ. Over residues 112-125 the composition is skewed to acidic residues; that stretch reads GEEEEEEDEEEEEE. The RRM 1 domain maps to 129–209; the sequence is NIVMLRMLPQ…QKVSMHYSDP (81 aa). The RanBP2-type zinc-finger motif lies at 212–242; the sequence is KINEDWLCNKCGVQNFKRREKCFKCGVPKSE. The RRM 2 domain maps to 300–384; sequence DTIILRNLNP…KTINVEFAKG (85 aa). Lysine 383 is subject to N6-acetyllysine. Disordered regions lie at residues 464 to 487, 503 to 522, 537 to 566, 620 to 646, and 712 to 753; these read GPGM…EAGA, APGL…TATN, ELQS…QYPV, EQSA…HKTK, and DLPK…EEKL. Residues 507–522 are compositionally biased toward polar residues; that stretch reads YQQSAEGSSGQSTATN. A compositionally biased stretch (low complexity) spans 540–562; it reads SPTQPSSSAFPPATSPTAPEAYS. A compositionally biased stretch (basic and acidic residues) spans 623-639; sequence ADGHKDTGASSKEGKEK. Serine 718, serine 723, serine 733, serine 736, and serine 738 each carry phosphoserine. The span at 743-753 shows a compositional bias: basic and acidic residues; that stretch reads ERGGPEREEKL. The C2H2-type; atypical zinc finger occupies 759–784; it reads LACLLCRRQFPSKEALIRHQQLSGLH. Phosphoserine is present on residues serine 781, serine 797, and serine 845. Residues 818–861 form a disordered region; sequence AAERREKYGIPEPPEPKRRKYGGISTASVDFEQPTRDGLGSDNI. The region spanning 858 to 904 is the G-patch domain; it reads SDNIGSRMLQAMGWKEGSGLGRKKQGIVTPIEAQTRVRGSGLGARGS. An Omega-N-methylarginine modification is found at arginine 902.

Associates with the spliceosome. Component of a large chromatin remodeling complex, at least composed of MYSM1, PCAF, RBM10 and KIF11/TRIP5.

It localises to the nucleus. Binds to ssRNA containing the consensus sequence 5'-AGGUAA-3'. May be involved in post-transcriptional processing, most probably in mRNA splicing. Binds to RNA homopolymers, with a preference for poly(G) and poly(U) and little for poly(A). May bind to specific miRNA hairpins. The sequence is that of RNA-binding protein 10 from Mus musculus (Mouse).